The primary structure comprises 190 residues: Major sperm protein 32 (190 aa).

The 118-residue stretch at 72–189 folds into the MSP domain; sequence MIQTQPGTKI…RRKNLPIEYN (118 aa).

As to expression, sperm.

It is found in the cell projection. The protein localises to the pseudopodium. Its subcellular location is the cytoplasm. The protein resides in the cytoskeleton. In terms of biological role, central component in molecular interactions underlying sperm crawling. Forms an extensive filament system that extends from sperm villipoda, along the leading edge of the pseudopod. The polypeptide is Major sperm protein 32 (msp-32) (Caenorhabditis elegans).